Here is a 350-residue protein sequence, read N- to C-terminus: Phosphotriesterase-related protein (350 aa).

The a divalent metal cation site is built by His-22, His-24, Glu-169, His-201, His-230, and Asp-298.

It belongs to the metallo-dependent hydrolases superfamily. Phosphotriesterase family. It depends on a divalent metal cation as a cofactor.

This Drosophila ananassae (Fruit fly) protein is Phosphotriesterase-related protein.